The following is a 301-amino-acid chain: GTPase Era (301 aa).

An Era-type G domain is found at 7-175; sequence YCGFIAIVGR…AAIVRKHLPE (169 aa). Residues 15–22 form a G1 region; sequence GRPNVGKS. 15–22 contributes to the GTP binding site; the sequence is GRPNVGKS. Residues 41–45 are G2; sequence QTTRH. The G3 stretch occupies residues 62–65; the sequence is DTPG. GTP is bound by residues 62–66 and 124–127; these read DTPGL and NKVD. The segment at 124–127 is G4; the sequence is NKVD. Residues 154–156 form a G5 region; it reads ISA. Positions 206-283 constitute a KH type-2 domain; the sequence is LGAELPYSVT…HLELWVKVKS (78 aa).

The protein belongs to the TRAFAC class TrmE-Era-EngA-EngB-Septin-like GTPase superfamily. Era GTPase family. As to quaternary structure, monomer.

The protein localises to the cytoplasm. It is found in the cell inner membrane. In terms of biological role, an essential GTPase that binds both GDP and GTP, with rapid nucleotide exchange. Plays a role in 16S rRNA processing and 30S ribosomal subunit biogenesis and possibly also in cell cycle regulation and energy metabolism. The chain is GTPase Era from Shigella flexneri serotype 5b (strain 8401).